The sequence spans 495 residues: Protein-serine O-palmitoleoyltransferase porcupine (495 aa).

8 helical membrane passes run 46–66 (TQYI…VLIV), 92–112 (VIDH…AVQW), 184–204 (TVLS…GPWI), 232–252 (MLIH…FLLT), 358–378 (PFGT…LHGL), 403–422 (LATI…SCTV), 434–454 (VINM…GCIF), and 475–495 (TELN…YFVI). H376 is an active-site residue.

It belongs to the membrane-bound acyltransferase family. Porcupine subfamily.

The protein localises to the endoplasmic reticulum membrane. The catalysed reaction is [Wnt protein]-L-serine + (9Z)-hexadecenoyl-CoA = [Wnt protein]-O-(9Z)-hexadecenoyl-L-serine + CoA. Protein-serine O-palmitoleoyltransferase that acts as a key regulator of the Wnt signaling pathway by mediating the attachment of palmitoleate, a 16-carbon monounsaturated fatty acid (C16:1(9Z)), to Wnt proteins. Serine palmitoleoylation of WNT proteins is required for efficient binding to frizzled receptors. The chain is Protein-serine O-palmitoleoyltransferase porcupine from Anopheles gambiae (African malaria mosquito).